A 299-amino-acid polypeptide reads, in one-letter code: Ankyrin repeat domain-containing protein 54 (299 aa).

Residues 1 to 32 (MAAAAGGADDESRSGRSSSDGECAVAPEPLTG) are disordered. Position 2 is an N-acetylalanine (A2). Residues S57 and S62 each carry the phosphoserine modification. The Nuclear localization signal (NLS) signature appears at 98-116 (RRLGPTGKEVHALKRLRDS). 4 ANK repeats span residues 108–137 (HALK…DPCA), 141–170 (KGRT…DPNQ), 174–203 (LGNT…RVDA), and 207–239 (AGRT…EVKQ). Residues 140–240 (DKGRTALHFA…EAVRLEVKQI (101 aa)) form an LYN-binding region. Residues 282–292 (LLASFTSLSLQ) carry the Nuclear export signal (NES) motif.

As to quaternary structure, interacts (via ankyrin repeat region) with LYN (via SH3-domain) in an activation-independent status of LYN. Forms a multiprotein complex with LYN and HCLS1. Interacts with TSN2, VAV1, DBNL and LASP1.

It localises to the nucleus. Its subcellular location is the cytoplasm. The protein resides in the midbody. Functionally, plays an important role in regulating intracellular signaling events associated with erythroid terminal differentiation. In Bos taurus (Bovine), this protein is Ankyrin repeat domain-containing protein 54 (ANKRD54).